Consider the following 224-residue polypeptide: UPF0758 protein Psyr_0222 (224 aa).

In terms of domain architecture, MPN spans 102–224 (ALENPTQVRS…PLSMVERGLM (123 aa)). Zn(2+)-binding residues include H173, H175, and D186. The JAMM motif motif lies at 173 to 186 (HNHPSGITTPSRSD).

This sequence belongs to the UPF0758 family.

This Pseudomonas syringae pv. syringae (strain B728a) protein is UPF0758 protein Psyr_0222.